Here is a 71-residue protein sequence, read N- to C-terminus: MGGRRRKKRTNDVKHVRFAAAVEVWEADDIERKGPWEQAAVDRFRFQRRIASVEELLSAVLLRQKKLLEQQ.

Important for host CHOP inhibition regions lie at residues Val16–Phe18 and Leu57–Leu61.

This sequence belongs to the asfivirus DP71L family. In terms of assembly, interacts (via C-terminus) with host PPP1CB.

Functionally, interacts with the host phosphatase PP1 catalytic subunit (PPP1CB) and recruits it to dephosphorylate EIF2S1/eIF2alpha and therefore restores the host translation that has been shut-down by the host. Also inhibits the EIF2S1/eIF2alpha-ATF4-DDIT3/CHOP pathway. The polypeptide is Protein DP71L (Ornithodoros (relapsing fever ticks)).